Here is a 293-residue protein sequence, read N- to C-terminus: 33 kDa chaperonin (293 aa).

2 disulfide bridges follow: Cys-236/Cys-238 and Cys-269/Cys-272.

This sequence belongs to the HSP33 family. Under oxidizing conditions two disulfide bonds are formed involving the reactive cysteines. Under reducing conditions zinc is bound to the reactive cysteines and the protein is inactive.

It is found in the cytoplasm. Redox regulated molecular chaperone. Protects both thermally unfolding and oxidatively damaged proteins from irreversible aggregation. Plays an important role in the bacterial defense system toward oxidative stress. This is 33 kDa chaperonin from Lactobacillus delbrueckii subsp. bulgaricus (strain ATCC BAA-365 / Lb-18).